The following is a 110-amino-acid chain: UPF0060 membrane protein Noc_2955 (110 aa).

4 consecutive transmembrane segments (helical) span residues 7–27, 33–53, 63–83, and 87–107; these read VGLF…AYLW, TIWL…LLSL, AAYG…VNGI, and TWDL…MFAP.

This sequence belongs to the UPF0060 family.

It is found in the cell inner membrane. The polypeptide is UPF0060 membrane protein Noc_2955 (Nitrosococcus oceani (strain ATCC 19707 / BCRC 17464 / JCM 30415 / NCIMB 11848 / C-107)).